The chain runs to 210 residues: 3-hexulose-6-phosphate synthase (210 aa).

Belongs to the HPS/KGPDC family. HPS subfamily.

It carries out the reaction D-ribulose 5-phosphate + formaldehyde = D-arabino-hex-3-ulose 6-phosphate. It functions in the pathway one-carbon metabolism; formaldehyde assimilation via RuMP pathway; D-fructose 6-phosphate from D-ribulose 5-phosphate and formaldehyde: step 1/2. Its function is as follows. Catalyzes the condensation of ribulose 5-phosphate with formaldehyde to form 3-hexulose 6-phosphate. This Staphylococcus aureus (strain USA300) protein is 3-hexulose-6-phosphate synthase.